Here is a 563-residue protein sequence, read N- to C-terminus: Sulfite reductase [NADPH] hemoprotein beta-component (563 aa).

Cysteine 427, cysteine 433, cysteine 472, and cysteine 476 together coordinate [4Fe-4S] cluster. Cysteine 476 is a siroheme binding site.

Belongs to the nitrite and sulfite reductase 4Fe-4S domain family. As to quaternary structure, alpha(8)-beta(8). The alpha component is a flavoprotein, the beta component is a hemoprotein. The cofactor is siroheme. [4Fe-4S] cluster is required as a cofactor.

It catalyses the reaction hydrogen sulfide + 3 NADP(+) + 3 H2O = sulfite + 3 NADPH + 4 H(+). It participates in sulfur metabolism; hydrogen sulfide biosynthesis; hydrogen sulfide from sulfite (NADPH route): step 1/1. In terms of biological role, component of the sulfite reductase complex that catalyzes the 6-electron reduction of sulfite to sulfide. This is one of several activities required for the biosynthesis of L-cysteine from sulfate. The polypeptide is Sulfite reductase [NADPH] hemoprotein beta-component (Acidithiobacillus ferrooxidans (strain ATCC 53993 / BNL-5-31) (Leptospirillum ferrooxidans (ATCC 53993))).